A 208-amino-acid chain; its full sequence is 28 kDa heat- and acid-stable phosphoprotein homolog (208 aa).

Disordered stretches follow at residues 1 to 133 and 145 to 208; these read MAGG…VTKK and LSRR…LGLA. Basic and acidic residues predominate over residues 16–44; the sequence is FGRDYERSKGKISRDRVYDEEDIIKRNQE. Low complexity-rich tracts occupy residues 52 to 69 and 84 to 100; these read GSESGSENETKNNNNKSK and RNPNAKKPAAKRPPTTK. Over residues 105-121 the composition is skewed to acidic residues; that stretch reads SDSEDDSDKESDSEDEI. A coiled-coil region spans residues 137–206; the sequence is INVNAKVELS…EKMAERRRLG (70 aa). Basic and acidic residues-rich tracts occupy residues 145–154 and 162–208; these read LSRREKEELA and QNEK…LGLA.

Belongs to the PDAP1 family.

The polypeptide is 28 kDa heat- and acid-stable phosphoprotein homolog (Dictyostelium discoideum (Social amoeba)).